Consider the following 342-residue polypeptide: GTPase Obg (342 aa).

Residues 1–159 (MQFIDQAQIE…KLLRLELKLL (159 aa)) enclose the Obg domain. In terms of domain architecture, OBG-type G spans 160–330 (AEVGIIGLPN…MLQEVWGILD (171 aa)). GTP contacts are provided by residues 166 to 173 (GLPNAGKS), 191 to 195 (FTTLI), 213 to 216 (DIPG), 280 to 283 (NKID), and 311 to 313 (SAV). Residues Ser173 and Thr193 each contribute to the Mg(2+) site.

It belongs to the TRAFAC class OBG-HflX-like GTPase superfamily. OBG GTPase family. In terms of assembly, monomer. Mg(2+) serves as cofactor.

It localises to the cytoplasm. In terms of biological role, an essential GTPase which binds GTP, GDP and possibly (p)ppGpp with moderate affinity, with high nucleotide exchange rates and a fairly low GTP hydrolysis rate. Plays a role in control of the cell cycle, stress response, ribosome biogenesis and in those bacteria that undergo differentiation, in morphogenesis control. This is GTPase Obg from Trichormus variabilis (strain ATCC 29413 / PCC 7937) (Anabaena variabilis).